The chain runs to 224 residues: UPF0758 protein RSc2444 (224 aa).

The MPN domain occupies 102 to 224; the sequence is TLESPQSVKD…VYSFLEHGKM (123 aa). Zn(2+) contacts are provided by His-173, His-175, and Asp-186. The JAMM motif motif lies at 173-186; the sequence is HNHPTGHVEPSESD.

The protein belongs to the UPF0758 family.

This is UPF0758 protein RSc2444 from Ralstonia nicotianae (strain ATCC BAA-1114 / GMI1000) (Ralstonia solanacearum).